The sequence spans 155 residues: Large ribosomal subunit protein uL13 (155 aa).

The protein belongs to the universal ribosomal protein uL13 family. In terms of assembly, part of the 50S ribosomal subunit.

Its function is as follows. This protein is one of the early assembly proteins of the 50S ribosomal subunit, although it is not seen to bind rRNA by itself. It is important during the early stages of 50S assembly. This chain is Large ribosomal subunit protein uL13, found in Rickettsia felis (strain ATCC VR-1525 / URRWXCal2) (Rickettsia azadi).